Consider the following 350-residue polypeptide: Zona pellucida-binding protein 1 (350 aa).

The signal sequence occupies residues 1–38 (MEASAPDRARRGWRRARAAASPLSRAAVVLLLSALVLR). N113, N186, and N339 each carry an N-linked (GlcNAc...) asparagine glycan.

Belongs to the zona pellucida-binding protein Sp38 family. N-glycosylated. As to expression, expressed in testis. Detected in sperm cells.

Its subcellular location is the cytoplasmic vesicle. The protein resides in the secretory vesicle. It localises to the acrosome. The protein localises to the secreted. It is found in the acrosome membrane. Its function is as follows. Plays a role in acrosome compaction and sperm morphogenesis. Is implicated in sperm-oocyte interaction during fertilization. The protein is Zona pellucida-binding protein 1 (ZPBP) of Sus scrofa (Pig).